We begin with the raw amino-acid sequence, 118 residues long: Large ribosomal subunit protein bL20c (118 aa).

It belongs to the bacterial ribosomal protein bL20 family.

The protein localises to the plastid. It is found in the chloroplast. Binds directly to 23S ribosomal RNA and is necessary for the in vitro assembly process of the 50S ribosomal subunit. It is not involved in the protein synthesizing functions of that subunit. The protein is Large ribosomal subunit protein bL20c of Gracilaria tenuistipitata var. liui (Red alga).